Reading from the N-terminus, the 210-residue chain is Oxygen-insensitive NADPH nitroreductase (210 aa).

An NADP(+)-binding site is contributed by 150-155; it reads GVSLMG.

This sequence belongs to the nitroreductase family.

Functionally, reduction of a variety of nitroaromatic compounds using NADPH as source of reducing equivalents; two electrons are transferred. This is Oxygen-insensitive NADPH nitroreductase (rdxA) from Helicobacter pylori (strain J99 / ATCC 700824) (Campylobacter pylori J99).